Reading from the N-terminus, the 336-residue chain is tRNA dimethylallyltransferase (336 aa).

Glycine 19–threonine 26 contacts ATP. Substrate is bound at residue threonine 21–threonine 26.

It belongs to the IPP transferase family. Monomer. Mg(2+) serves as cofactor.

It carries out the reaction adenosine(37) in tRNA + dimethylallyl diphosphate = N(6)-dimethylallyladenosine(37) in tRNA + diphosphate. Functionally, catalyzes the transfer of a dimethylallyl group onto the adenine at position 37 in tRNAs that read codons beginning with uridine, leading to the formation of N6-(dimethylallyl)adenosine (i(6)A). The sequence is that of tRNA dimethylallyltransferase from Bifidobacterium adolescentis (strain ATCC 15703 / DSM 20083 / NCTC 11814 / E194a).